The chain runs to 231 residues: MKQYNDLFKIIHREGYIFIASFALVSFLLASFNEKLGCIGCIATAWCIYFFRNPDRFVPISDDLVISPADGIIQEIKEALPPPELGLGDVEMIRVSIFLNIFNVHVNRIPANGKILALHYNPGKFFNASLDKASIYNERQSVLMETAQGQKIVFVQIAGLIARRIVCDLEEGNEVKTGERYGIIRFGSRVDVYLPLKTALLVSKGQTAIGGETIIADFGRKKTTEFKFDRK.

Ser-188 serves as the catalytic Schiff-base intermediate with substrate; via pyruvic acid. Ser-188 bears the Pyruvic acid (Ser); by autocatalysis mark.

The protein belongs to the phosphatidylserine decarboxylase family. PSD-A subfamily. Heterodimer of a large membrane-associated beta subunit and a small pyruvoyl-containing alpha subunit. It depends on pyruvate as a cofactor. In terms of processing, is synthesized initially as an inactive proenzyme. Formation of the active enzyme involves a self-maturation process in which the active site pyruvoyl group is generated from an internal serine residue via an autocatalytic post-translational modification. Two non-identical subunits are generated from the proenzyme in this reaction, and the pyruvate is formed at the N-terminus of the alpha chain, which is derived from the carboxyl end of the proenzyme. The post-translation cleavage follows an unusual pathway, termed non-hydrolytic serinolysis, in which the side chain hydroxyl group of the serine supplies its oxygen atom to form the C-terminus of the beta chain, while the remainder of the serine residue undergoes an oxidative deamination to produce ammonia and the pyruvoyl prosthetic group on the alpha chain.

The protein localises to the cell membrane. The enzyme catalyses a 1,2-diacyl-sn-glycero-3-phospho-L-serine + H(+) = a 1,2-diacyl-sn-glycero-3-phosphoethanolamine + CO2. It participates in phospholipid metabolism; phosphatidylethanolamine biosynthesis; phosphatidylethanolamine from CDP-diacylglycerol: step 2/2. In terms of biological role, catalyzes the formation of phosphatidylethanolamine (PtdEtn) from phosphatidylserine (PtdSer). The polypeptide is Phosphatidylserine decarboxylase proenzyme (Rickettsia peacockii (strain Rustic)).